Reading from the N-terminus, the 434-residue chain is Methylenetetrahydrofolate--tRNA-(uracil-5-)-methyltransferase TrmFO (434 aa).

9–14 (GAGLAG) contributes to the FAD binding site.

It belongs to the MnmG family. TrmFO subfamily. The cofactor is FAD.

It is found in the cytoplasm. It catalyses the reaction uridine(54) in tRNA + (6R)-5,10-methylene-5,6,7,8-tetrahydrofolate + NADH + H(+) = 5-methyluridine(54) in tRNA + (6S)-5,6,7,8-tetrahydrofolate + NAD(+). The enzyme catalyses uridine(54) in tRNA + (6R)-5,10-methylene-5,6,7,8-tetrahydrofolate + NADPH + H(+) = 5-methyluridine(54) in tRNA + (6S)-5,6,7,8-tetrahydrofolate + NADP(+). Catalyzes the folate-dependent formation of 5-methyl-uridine at position 54 (M-5-U54) in all tRNAs. The sequence is that of Methylenetetrahydrofolate--tRNA-(uracil-5-)-methyltransferase TrmFO from Listeria monocytogenes serovar 1/2a (strain ATCC BAA-679 / EGD-e).